The following is a 262-amino-acid chain: Ribosomal RNA small subunit methyltransferase A (262 aa).

S-adenosyl-L-methionine-binding residues include asparagine 13, leucine 15, glycine 40, glutamate 61, aspartate 85, and asparagine 104.

It belongs to the class I-like SAM-binding methyltransferase superfamily. rRNA adenine N(6)-methyltransferase family. RsmA subfamily.

Its subcellular location is the cytoplasm. It carries out the reaction adenosine(1518)/adenosine(1519) in 16S rRNA + 4 S-adenosyl-L-methionine = N(6)-dimethyladenosine(1518)/N(6)-dimethyladenosine(1519) in 16S rRNA + 4 S-adenosyl-L-homocysteine + 4 H(+). Its function is as follows. Specifically dimethylates two adjacent adenosines (A1518 and A1519) in the loop of a conserved hairpin near the 3'-end of 16S rRNA in the 30S particle. May play a critical role in biogenesis of 30S subunits. The sequence is that of Ribosomal RNA small subunit methyltransferase A from Chromobacterium violaceum (strain ATCC 12472 / DSM 30191 / JCM 1249 / CCUG 213 / NBRC 12614 / NCIMB 9131 / NCTC 9757 / MK).